Here is an 864-residue protein sequence, read N- to C-terminus: Leucine--tRNA ligase (864 aa).

The short motif at 42 to 52 (PYPSGKLHMGH) is the 'HIGH' region element. Positions 624–628 (KMSKS) match the 'KMSKS' region motif. Lys-627 lines the ATP pocket.

This sequence belongs to the class-I aminoacyl-tRNA synthetase family.

The protein localises to the cytoplasm. It catalyses the reaction tRNA(Leu) + L-leucine + ATP = L-leucyl-tRNA(Leu) + AMP + diphosphate. This Burkholderia mallei (strain ATCC 23344) protein is Leucine--tRNA ligase.